A 1801-amino-acid chain; its full sequence is Protein mono-ADP-ribosyltransferase PARP14 (1801 aa).

Ser33 is modified (phosphoserine). The disordered stretch occupies residues 109–132 (SKTKEDVKEPDVSEELDTKLPLDG). 3 Macro domains span residues 791 to 978 (KCFS…KTVF), 1003 to 1190 (WEKG…ARRA), and 1216 to 1387 (DSGV…KKRE). A glycoprotein is bound by residues Asn824, Leu833, 922–926 (SSGVF), Asp961, 1023–1024 (VQ), Ser1034, 1046–1049 (LSKS), 1133–1137 (GTGNL), 1175–1178 (DHEN), 1235–1236 (DI), Ser1247, Val1258, 1332–1336 (GTGNA), and Phe1371. Residues Ser1403 and Ser1411 each carry the phosphoserine modification. Residues 1523–1601 (EQESRADCIS…SLSVQRLTKS (79 aa)) form the WWE domain. A PARP catalytic domain is found at 1605-1801 (IPAHWSDMKQ…YPEYLITFRK (197 aa)).

It belongs to the ARTD/PARP family. In terms of assembly, interacts with STAT6. Interacts with PARP10. Interacts with PARP9 in IFNG-stimulated macrophages; the interaction prevents PARP14-mediated STAT1 and STAT6 ADP-riboslylation. Auto-ADP-ribosylated. In terms of tissue distribution, expressed in macrophages.

It is found in the nucleus. The protein resides in the cytoplasm. It catalyses the reaction L-glutamyl-[protein] + NAD(+) = 5-O-(ADP-D-ribosyl)-L-glutamyl-[protein] + nicotinamide. Functionally, ADP-ribosyltransferase that mediates mono-ADP-ribosylation of glutamate residues on target proteins. In contrast to PARP1 and PARP2, it is not able to mediate poly-ADP-ribosylation. Has been shown to catalyze the mono-ADP-ribosylation of STAT1 at 'Glu-657' and 'Glu-705', thus decreasing STAT1 phosphorylation which negatively regulates pro-inflammatory cytokine production in macrophages in response to IFNG stimulation. However, the role of ADP-ribosylation in the prevention of STAT1 phosphorylation has been called into question and it has been suggested that the inhibition of phosphorylation may be the result of sumoylation of STAT1 'Lys-703'. Mono-ADP-ribosylates STAT6; enhancing STAT6-dependent transcription. In macrophages, positively regulates MRC1 expression in response to IL4 stimulation by promoting STAT6 phosphorylation. Mono-ADP-ribosylates PARP9. In Homo sapiens (Human), this protein is Protein mono-ADP-ribosyltransferase PARP14.